A 487-amino-acid polypeptide reads, in one-letter code: Cytochrome P450 720B2 (487 aa).

The chain crosses the membrane as a helical span at residues 14 to 34 (WLVGLLCLVLGFLLLQLYKLV). Cysteine 436 contacts heme.

It belongs to the cytochrome P450 family. Requires heme as cofactor.

The protein localises to the membrane. The protein is Cytochrome P450 720B2 (CYP720B2) of Pinus taeda (Loblolly pine).